The sequence spans 615 residues: DNA mismatch repair protein MutL (615 aa).

The protein belongs to the DNA mismatch repair MutL/HexB family.

Its function is as follows. This protein is involved in the repair of mismatches in DNA. It is required for dam-dependent methyl-directed DNA mismatch repair. May act as a 'molecular matchmaker', a protein that promotes the formation of a stable complex between two or more DNA-binding proteins in an ATP-dependent manner without itself being part of a final effector complex. The sequence is that of DNA mismatch repair protein MutL from Parabacteroides distasonis (strain ATCC 8503 / DSM 20701 / CIP 104284 / JCM 5825 / NCTC 11152).